The sequence spans 551 residues: Lysine--tRNA ligase (551 aa).

A 'HIGH' region motif is present at residues 54-62 (PSGLPHIGT). The 'KMSKS' region signature appears at 303-307 (KISKS). Position 306 (lysine 306) interacts with ATP.

Belongs to the class-I aminoacyl-tRNA synthetase family.

It is found in the cytoplasm. The catalysed reaction is tRNA(Lys) + L-lysine + ATP = L-lysyl-tRNA(Lys) + AMP + diphosphate. In Brucella melitensis biotype 1 (strain ATCC 23456 / CCUG 17765 / NCTC 10094 / 16M), this protein is Lysine--tRNA ligase.